An 82-amino-acid chain; its full sequence is Turripeptide Gsp9.2 (82 aa).

Residues 1 to 23 (MMAKLMITVMMVLLLSLQQGADG) form the signal peptide. Residues 24-46 (RSERWRKNQMAASSIMRNLITAR) constitute a propeptide that is removed on maturation. Residues P49 and P50 each carry the 4-hydroxyproline modification. Intrachain disulfides connect C53/C68, C58/C72, and C64/C79. E56 carries the post-translational modification 4-carboxyglutamate.

This sequence belongs to the Pg turripeptide superfamily. In terms of tissue distribution, expressed by the venom duct.

The protein localises to the secreted. This is Turripeptide Gsp9.2 from Gemmula speciosa (Splendid gem-turris).